A 631-amino-acid polypeptide reads, in one-letter code: Iron transport multicopper oxidase FET3 (631 aa).

A signal peptide spans 1 to 25 (MKVSTHHFLPSLLVALWSWATVAQA). The Extracellular segment spans residues 26–564 (ATHTFNWTTG…ANIPDGFTAK (539 aa)). N-linked (GlcNAc...) asparagine glycosylation is found at N31 and N81. 2 consecutive Plastocyanin-like domains span residues 50-148 (ITCN…LVVE) and 195-297 (NLII…LMLN). Residues H85 and H87 each contribute to the Cu cation site. N-linked (GlcNAc...) asparagine glycosylation is found at N92 and N117. Residues H130 and H132 each coordinate Cu cation. 7 N-linked (GlcNAc...) asparagine glycosylation sites follow: N199, N203, N249, N270, N297, N364, and N413. Residues 387-506 (NPLVYGTNTN…QGLALLLIEA (120 aa)) form the Plastocyanin-like 3 domain. The Cu cation site is built by H418, H421, H423, H488, C489, H490, and H494. The chain crosses the membrane as a helical span at residues 565–585 (GIVAMTFSCLAGVLGLISLST). Residues 586-630 (YGLMGVKKSEEEIIRDLGMDPDAVEKVDVSDINSDEDSSRTSKNI) are Cytoplasmic-facing. The tract at residues 610-631 (EKVDVSDINSDEDSSRTSKNIE) is disordered. Positions 622 to 631 (DSSRTSKNIE) are enriched in basic and acidic residues.

Belongs to the multicopper oxidase family. The cofactor is Cu cation.

The protein localises to the cell membrane. Iron transport multicopper ferroxidase required for Fe(2+) high affinity uptake. Required to oxidize Fe(2+) and release it from the transporter. Essential component of copper-dependent iron transport. This is Iron transport multicopper oxidase FET3 (FET3) from Kluyveromyces lactis (strain ATCC 8585 / CBS 2359 / DSM 70799 / NBRC 1267 / NRRL Y-1140 / WM37) (Yeast).